A 399-amino-acid chain; its full sequence is MAATTAAVVAEEDTELRDLLVQTLENSGVLNRIKAELRAAVFLALEEQEKVENKTPLVNENLKKFLNTKDGRLVASLVAEFLQFFNLDFTLAVFHPETSTIQGLEGRENLAQDLGIIEAEGTVGGPLLLEVIRRCQQKEKGPASVEGALDLSDGHPPSKSPEGKSSANSTPSKIPRYKGQGKKKTIGQKPGDKKTSSETSQSEPSVSLSESKSKSSLHSLAHETRIASFLSSSAVDARDSSALCPDGDDVEGDSFFDDPIPKPEKTYGWRAEPRKQVGGLASLSDKPHLRSGLSSLAGAPSLTDPESKRGSTVLKDLKLVGEKIGSLGLGTGEDEDYADDFNSASHRSEKSELSIGEEIEEDLSMGVEDGNTSDKLDDLTQDLTVSQLSDVADYLEDVA.

A LisH domain is found at 70–102 (DGRLVASLVAEFLQFFNLDFTLAVFHPETSTIQ). Disordered regions lie at residues 142–216 (PASV…SKSS) and 236–311 (DARD…KRGS). 2 positions are modified to phosphoserine: serine 152 and serine 160. Residues 163-172 (GKSSANSTPS) show a composition bias toward polar residues. Threonine 170 carries the phosphothreonine modification. The segment covering 175 to 186 (PRYKGQGKKKTI) has biased composition (basic residues). Positions 197 to 216 (SETSQSEPSVSLSESKSKSS) are enriched in low complexity. Serine 202 is modified (phosphoserine). Residues 246–256 (DGDDVEGDSFF) are compositionally biased toward acidic residues. The span at 259–275 (PIPKPEKTYGWRAEPRK) shows a compositional bias: basic and acidic residues. Low complexity predominate over residues 290–302 (RSGLSSLAGAPSL). 2 positions are modified to phosphoserine: serine 301 and serine 326. Residues 328–354 (GLGTGEDEDYADDFNSASHRSEKSELS) form a disordered region. Tyrosine 337 bears the Phosphotyrosine mark.

The protein belongs to the CEP43 family. In terms of assembly, homodimer. Part of a ternary complex that contains CEP350, CEP43 and MAPRE1. Interacts directly with CEP350 and MAPRE1. Interacts with CEP19. Interacts (via N-terminus) with CEP350 (via C-terminus).

Its subcellular location is the cytoplasm. The protein resides in the cytoskeleton. The protein localises to the microtubule organizing center. It is found in the centrosome. It localises to the centriole. Its subcellular location is the cilium basal body. Required for anchoring microtubules to the centrosomes. Required for ciliation. The chain is Centrosomal protein 43 from Mus musculus (Mouse).